The sequence spans 181 residues: Small ribosomal subunit protein uS4 (181 aa).

Residues 104–166 form the S4 RNA-binding domain; it reads RRLQTIVYKK…VTSSFKSRPP (63 aa).

It belongs to the universal ribosomal protein uS4 family. In terms of assembly, part of the 30S ribosomal subunit. Contacts protein S5. The interaction surface between S4 and S5 is involved in control of translational fidelity.

One of the primary rRNA binding proteins, it binds directly to 16S rRNA where it nucleates assembly of the body of the 30S subunit. Its function is as follows. With S5 and S12 plays an important role in translational accuracy. The sequence is that of Small ribosomal subunit protein uS4 from Saccharolobus islandicus (strain Y.N.15.51 / Yellowstone #2) (Sulfolobus islandicus).